Reading from the N-terminus, the 435-residue chain is N-lysine methyltransferase SMYD2-A (435 aa).

The SET domain occupies 7 to 241 (EGTERFLSPG…PEEEIFNSYI (235 aa)). S-adenosyl-L-methionine is bound at residue 17 to 19 (KGR). Zn(2+) is bound by residues Cys52, Cys55, Cys65, Cys68, Cys74, Cys78, His86, and Cys90. An MYND-type zinc finger spans residues 52–90 (CECCFTRKEGLSKCGKCKQAYYCNVECQRGDWPMHKLEC). Residues His137, 206-207 (NH), and 258-260 (YFF) contribute to the S-adenosyl-L-methionine site.

It belongs to the class V-like SAM-binding methyltransferase superfamily.

The protein resides in the cytoplasm. It is found in the cytosol. Its subcellular location is the nucleus. The catalysed reaction is L-lysyl(4)-[histone H3] + 3 S-adenosyl-L-methionine = N(6),N(6),N(6)-trimethyl-L-lysyl(4)-[histone H3] + 3 S-adenosyl-L-homocysteine + 3 H(+). It catalyses the reaction L-lysyl-[protein] + S-adenosyl-L-methionine = N(6)-methyl-L-lysyl-[protein] + S-adenosyl-L-homocysteine + H(+). Its function is as follows. Protein-lysine N-methyltransferase that methylates both histones and non-histone proteins, including p53/TP53 and RB1. Specifically trimethylates histone H3 'Lys-4' (H3K4me3) in vivo. The activity requires interaction with HSP90alpha. Shows even higher methyltransferase activity on p53/TP53. Monomethylates 'Lys-370' of p53/TP53, leading to decreased DNA-binding activity and subsequent transcriptional regulation activity of p53/TP53. Monomethylates RB1 at 'Lys-860'. In Danio rerio (Zebrafish), this protein is N-lysine methyltransferase SMYD2-A (smyd2a).